The chain runs to 116 residues: Protein TCL1B1 (116 aa).

This sequence belongs to the TCL1 family.

The protein is Protein TCL1B1 (Tcl1b1) of Mus musculus (Mouse).